A 73-amino-acid polypeptide reads, in one-letter code: Translation initiation factor IF-1 (73 aa).

Positions 1–73 (MPKKDGVIEI…SRGRIVYRYK (73 aa)) constitute an S1-like domain.

Belongs to the IF-1 family. Component of the 30S ribosomal translation pre-initiation complex which assembles on the 30S ribosome in the order IF-2 and IF-3, IF-1 and N-formylmethionyl-tRNA(fMet); mRNA recruitment can occur at any time during PIC assembly.

Its subcellular location is the cytoplasm. Its function is as follows. One of the essential components for the initiation of protein synthesis. Stabilizes the binding of IF-2 and IF-3 on the 30S subunit to which N-formylmethionyl-tRNA(fMet) subsequently binds. Helps modulate mRNA selection, yielding the 30S pre-initiation complex (PIC). Upon addition of the 50S ribosomal subunit IF-1, IF-2 and IF-3 are released leaving the mature 70S translation initiation complex. The sequence is that of Translation initiation factor IF-1 from Kineococcus radiotolerans (strain ATCC BAA-149 / DSM 14245 / SRS30216).